The sequence spans 414 residues: Probable 1-acylglycerol-3-phosphate O-acyltransferase (414 aa).

Residues 117–382 enclose the AB hydrolase-1 domain; the sequence is PTLVMVHGYG…GGHFVFIDNP (266 aa). Residues 193–197 carry the GXSXG motif; it reads GHSFG. Residues 375-380 carry the HXXXXD motif motif; that stretch reads HFVFID.

Belongs to the peptidase S33 family. ABHD4/ABHD5 subfamily.

It localises to the cytoplasm. The catalysed reaction is a 1-acyl-sn-glycero-3-phosphate + an acyl-CoA = a 1,2-diacyl-sn-glycero-3-phosphate + CoA. In terms of biological role, lysophosphatidic acid acyltransferase which functions in phosphatidic acid biosynthesis. May regulate neutral lipid accumulation and participate in the regulation of lipid turnover in vegetative cells. May possess additional triacylglycerol lipase and phospholipase A2 activities in vitro. This chain is Probable 1-acylglycerol-3-phosphate O-acyltransferase, found in Oryza sativa subsp. japonica (Rice).